Consider the following 584-residue polypeptide: MGKTYSSPVNPIPKAPKGLAIHHWLNFLQAAYRLQPGPSEFDFHQLRKFLKLAIKTPVWLNPINYSVLARLIPKNYPGRVHEIVAILIQETPAREAPPSAPPADDPQKPPPYPEHAQVEPQCLPVLHPHGAPATHRPWQMKDLQAIKQEVSSSAPGSPQFMQTVRLAVQQFDPTAKDLHDLLQYLCSSLVASLHHQQLETLIAQAETQGITGYNPLAGPLRVQANNPNQQGLRREYQNLWLSAFSALPGNTKDPTWAAILQGPEEPFCSFVERLNVALDNGLPEGTPKDPILRSLAYSNANKECQKLLQARGQTNSPLGEMLRACQTWTPRDKNKILMIQPKKTPPPNQPCFRCGQAGHWSRDCKQPRPPPGPCPLCQDPAHWKQDCPQLKADTKGSEDLLLDLPCEASHVRERKNLLRGGGLTSPRTILPLIPLSQQRQPILHVQVSFSNTSPVGVQALLDTGADITVLPAYLCPPDSNLQDTTVLGAGGPSTSKFKILPRPVHIHLPFRKQPVTLTSCLIDTNDQWTILGRDALQQCQSSLYLADQPSSVLPVQTPKLIGLEHLPPPPEVSQFPLNRSASRP.

Glycine 2 carries the N-myristoyl glycine; by host lipid modification. Residues 93–117 are disordered; it reads AREAPPSAPPADDPQKPPPYPEHAQ. Positions 98–101 match the PTAP/PSAP motif motif; it reads PSAP. Pro residues predominate over residues 98-113; the sequence is PSAPPADDPQKPPPYP. The PPXY motif motif lies at 109 to 112; it reads PPPY. 2 consecutive CCHC-type zinc fingers follow at residues 349–366 and 372–389; these read QPCF…DCKQ and GPCP…DCPQ. The region spanning 457 to 535 is the Peptidase A2 domain; that stretch reads VQALLDTGAD…DQWTILGRDA (79 aa). The active-site For protease activity; shared with dimeric partner is the aspartate 462. The tract at residues 564-584 is disordered; the sequence is EHLPPPPEVSQFPLNRSASRP. The span at 575–584 shows a compositional bias: polar residues; the sequence is FPLNRSASRP.

Interacts with human TSG101. This interaction is essential for budding and release of viral particles. In terms of processing, specific enzymatic cleavages by the viral protease yield mature proteins. The polyprotein is cleaved during and after budding, this process is termed maturation. The protease is autoproteolytically processed at its N- and C-termini.

It localises to the virion. Matrix protein p19 targets Gag, Gag-Pro and Gag-Pro-Pol polyproteins to the plasma membrane via a multipartite membrane binding signal, that includes its myristoylated N-terminus. Also mediates nuclear localization of the preintegration complex. Its function is as follows. Capsid protein p24 forms the conical core of the virus that encapsulates the genomic RNA-nucleocapsid complex. Functionally, nucleocapsid protein p15 is involved in the packaging and encapsidation of two copies of the genome. In terms of biological role, the aspartyl protease mediates proteolytic cleavages of Gag, Gag-Pro and Gag-Pro-Pol polyproteins during or shortly after the release of the virion from the plasma membrane. Cleavages take place as an ordered, step-wise cascade to yield mature proteins. This process is called maturation. Displays maximal activity during the budding process just prior to particle release from the cell. Hydrolyzes host EIF4GI in order to shut off the capped cellular mRNA translation. The resulting inhibition of cellular protein synthesis serves to ensure maximal viral gene expression and to evade host immune response. The polypeptide is Gag-Pro polyprotein (gag-pro) (Human T-cell leukemia virus 3 (strain Pyl43) (HTLV-3)).